The primary structure comprises 376 residues: NIF3-like protein 1 (376 aa).

Lys108 bears the N6-acetyllysine mark. A mediates interaction with COPS2 region spans residues 243–376 (LLLHTGMGRL…ETDRDPLRVV (134 aa)). Thr254 is subject to Phosphothreonine. Ser258 is modified (phosphoserine).

It belongs to the GTP cyclohydrolase I type 2/NIF3 family. As to quaternary structure, homodimer. Interacts with COPS2. Interacts with THOC7. In terms of tissue distribution, ubiquitous. Detected in all tissues tested with higher expression in cerebellum, heart and kidney and to a lower level in cerebrum, lung, liver, spleen and muscle.

The protein localises to the cytoplasm. It localises to the nucleus. May function as a transcriptional corepressor through its interaction with COPS2, negatively regulating the expression of genes involved in neuronal differentiation. This chain is NIF3-like protein 1, found in Mus musculus (Mouse).